The following is a 432-amino-acid chain: Phosphomethylpyrimidine synthase (432 aa).

Residues N66, M95, Y124, H163, 185–187 (SRG), 226–229 (DGLR), and E265 each bind substrate. H269 is a binding site for Zn(2+). Y292 is a substrate binding site. H333 contacts Zn(2+). C409, C412, and C416 together coordinate [4Fe-4S] cluster.

This sequence belongs to the ThiC family. The cofactor is [4Fe-4S] cluster.

The enzyme catalyses 5-amino-1-(5-phospho-beta-D-ribosyl)imidazole + S-adenosyl-L-methionine = 4-amino-2-methyl-5-(phosphooxymethyl)pyrimidine + CO + 5'-deoxyadenosine + formate + L-methionine + 3 H(+). It participates in cofactor biosynthesis; thiamine diphosphate biosynthesis. Functionally, catalyzes the synthesis of the hydroxymethylpyrimidine phosphate (HMP-P) moiety of thiamine from aminoimidazole ribotide (AIR) in a radical S-adenosyl-L-methionine (SAM)-dependent reaction. This is Phosphomethylpyrimidine synthase from Thermoanaerobacter pseudethanolicus (strain ATCC 33223 / 39E) (Clostridium thermohydrosulfuricum).